The chain runs to 509 residues: Maturase K (509 aa).

The protein belongs to the intron maturase 2 family. MatK subfamily.

The protein localises to the plastid. It localises to the chloroplast. Its function is as follows. Usually encoded in the trnK tRNA gene intron. Probably assists in splicing its own and other chloroplast group II introns. The protein is Maturase K of Nicotiana paniculata.